Consider the following 655-residue polypeptide: Peroxidase skpo-1 (655 aa).

The first 19 residues, 1–19 (MKSLLFSILLIYLIQLVRS), serve as a signal peptide directing secretion. The 35-residue stretch at 22–56 (CTDKHIHCFFWSQEGECEVNPRWMKKHCQKACGTC) folds into the ShKT domain. 4 disulfide bridges follow: C22/C56, C29/C49, C38/C53, and C133/C150. H222 acts as the Proton acceptor in catalysis. Heme b is bound at residue H428. 2 disulfide bridges follow: C520/C576 and C617/C642.

It belongs to the peroxidase family. XPO subfamily. Heme b is required as a cofactor. As to expression, exclusively expressed in hypodermis.

The catalysed reaction is 2 a phenolic donor + H2O2 = 2 a phenolic radical donor + 2 H2O. In terms of biological role, involved in hypodermal immune response against some types of bacterial infection. Probably utilizes H(2)O(2) produced by the NADPH oxidase bli-3. May play a role in cuticule biosynthesis. This Caenorhabditis elegans protein is Peroxidase skpo-1.